We begin with the raw amino-acid sequence, 393 residues long: Nuclear speckle splicing regulatory protein 1 homolog (393 aa).

Residues 1-49 are disordered; sequence MSAPPKRFGLIVKQKEEPKRAPVRVSSVFGDDDDDEAPATATNTSSASV. The segment covering 39-48 has biased composition (low complexity); sequence ATATNTSSAS. The stretch at 76–166 forms a coiled coil; that stretch reads NYDEIQAIKN…YREQEAEEAA (91 aa). The interval 187 to 350 is disordered; it reads LLNDLARDPT…SLKDKLKPKR (164 aa). Over residues 199–209 the composition is skewed to basic residues; it reads KQRKMEKKNVR. Composition is skewed to basic and acidic residues over residues 222–236, 243–261, 317–333, and 341–350; these read EDVK…KSIY, DEKK…EGEL, DHAQ…KSPE, and SLKDKLKPKR.

It belongs to the NSRP1 family.

The chain is Nuclear speckle splicing regulatory protein 1 homolog from Caenorhabditis briggsae.